The sequence spans 101 residues: Small ribosomal subunit protein uS14 (101 aa).

Basic and acidic residues predominate over residues 1 to 10 (MAKKSSIEKN). Residues 1-23 (MAKKSSIEKNNRRRKMTKNAAPK) form a disordered region. A compositionally biased stretch (basic residues) spans 11 to 23 (NRRRKMTKNAAPK).

The protein belongs to the universal ribosomal protein uS14 family. In terms of assembly, part of the 30S ribosomal subunit. Contacts proteins S3 and S10.

In terms of biological role, binds 16S rRNA, required for the assembly of 30S particles and may also be responsible for determining the conformation of the 16S rRNA at the A site. The chain is Small ribosomal subunit protein uS14 from Rhodopseudomonas palustris (strain BisB5).